The chain runs to 732 residues: Conidiogenone synthase (732 aa).

The tract at residues 1 to 311 (MADKITDEYA…SLCVPRYCKV (311 aa)) is terpene cyclase. D97 contributes to the Mg(2+) binding site. Residues D97, 169–172 (RIVD), N213, 217–221 (SWDKE), and 307–308 (RY) each bind substrate. Positions 97-101 (DALNQ) match the DDXXD 1 motif. An NSE/DTE motif is present at residues 213–221 (NDLFSWDKE). The prenyltransferase stretch occupies residues 312 to 732 (DRNPYKDHLE…LRAMEETLQK (421 aa)). Positions 348–370 (KQSELKDPSSSTYKSHFSPLEPN) are disordered. Residues K402, R405, and H434 each coordinate isopentenyl diphosphate. The Mg(2+) site is built by D441 and D445. The DDXXD 2 signature appears at 441-445 (DDIQD). R450 provides a ligand contact to dimethylallyl diphosphate. R451 lines the isopentenyl diphosphate pocket. Residues K529, T530, Q565, N572, K582, and K592 each coordinate dimethylallyl diphosphate.

This sequence in the N-terminal section; belongs to the terpene synthase family. In the C-terminal section; belongs to the FPP/GGPP synthase family. As to quaternary structure, hexamer. Mg(2+) serves as cofactor.

It catalyses the reaction isopentenyl diphosphate + (2E,6E)-farnesyl diphosphate = (2E,6E,10E)-geranylgeranyl diphosphate + diphosphate. Its pathway is secondary metabolite biosynthesis; terpenoid biosynthesis. Bifunctional terpene synthase; part of the gene cluster that mediates the biosynthesis of conidiogenone, a diterpene known to induce the conidiation. The bifunctional terpene synthase PchDS converts isopentenyl diphosphate (IPP) and dimethylallyl diphosphate (DMAPP) into deoxyconidiogenol. The C-terminal prenyltransferase (PT) domain of PchDS catalyzes formation of GGPP, whereas the N-terminal terpene cyclase (TC) domain catalyzes the cyclization of GGPP into deoxyconidiogenol. The cytochrome P450 monooxygenase PchP450 then catalyzes two rounds of oxidation to furnish conidiogenone. The sequence is that of Conidiogenone synthase from Penicillium rubens (strain ATCC 28089 / DSM 1075 / NRRL 1951 / Wisconsin 54-1255) (Penicillium chrysogenum).